The sequence spans 166 residues: UPF0561 protein C2orf68 homolog (166 aa).

Positions 36–49 (RDDYDKKVKQAAKE) are enriched in basic and acidic residues. Positions 36–108 (RDDYDKKVKQ…EPEPPGHQLF (73 aa)) are disordered.

The protein belongs to the UPF0561 family.

The polypeptide is UPF0561 protein C2orf68 homolog (Bos taurus (Bovine)).